The following is a 305-amino-acid chain: Methionyl-tRNA formyltransferase (305 aa).

108–111 (SLLP) contributes to the (6S)-5,6,7,8-tetrahydrofolate binding site.

This sequence belongs to the Fmt family.

The enzyme catalyses L-methionyl-tRNA(fMet) + (6R)-10-formyltetrahydrofolate = N-formyl-L-methionyl-tRNA(fMet) + (6S)-5,6,7,8-tetrahydrofolate + H(+). Its function is as follows. Attaches a formyl group to the free amino group of methionyl-tRNA(fMet). The formyl group appears to play a dual role in the initiator identity of N-formylmethionyl-tRNA by promoting its recognition by IF2 and preventing the misappropriation of this tRNA by the elongation apparatus. This Clavibacter michiganensis subsp. michiganensis (strain NCPPB 382) protein is Methionyl-tRNA formyltransferase.